Consider the following 372-residue polypeptide: Lysophosphatidic acid receptor 5 (372 aa).

The Extracellular segment spans residues 1–26 (MLANSSSTNSSVLPCPDYRPTHRLHL). N-linked (GlcNAc...) asparagine glycans are attached at residues asparagine 4 and asparagine 9. Residues 27-47 (VVYSLVLAAGLPLNALALWVF) form a helical membrane-spanning segment. Over 48–55 (LRALRVHS) the chain is Cytoplasmic. A helical transmembrane segment spans residues 56 to 76 (VVSVYMCNLAASDLLFTLSLP). Over 77–96 (VRLSYYALHHWPFPDLLCQT) the chain is Extracellular. The cysteines at positions 94 and 175 are disulfide-linked. Residues 97–117 (TGAIFQMNMYGSCIFLMLINV) form a helical membrane-spanning segment. The Cytoplasmic segment spans residues 118-136 (DRYAAIVHPLRLRHLRRPR). A helical transmembrane segment spans residues 137-157 (VARLLCLGVWALILVFAVPAA). The Extracellular segment spans residues 158 to 187 (RVHRPSRCRYRDLEVRLCFESFSDELWKGR). A helical membrane pass occupies residues 188 to 208 (LLPLVLLAEALGFLLPLAAVV). Topologically, residues 209 to 239 (YSSGRVFWTLARPDATQSQRRRKTVRLLLAN) are cytoplasmic. Residues 240–260 (LVIFLLCFVPYNSTLAVYGLL) form a helical membrane-spanning segment. Over 261-276 (RSKLVAASVPARDRVR) the chain is Extracellular. A helical membrane pass occupies residues 277-297 (GVLMVMVLLAGANCVLDPLVY). Residues 298 to 372 (YFSAEGFRNT…FTQCPQDSAL (75 aa)) are Cytoplasmic-facing. A disordered region spans residues 312-372 (GTPHRARTSA…FTQCPQDSAL (61 aa)). Polar residues-rich tracts occupy residues 332 to 341 (SERSAVTTDA) and 357 to 372 (SHSL…DSAL).

This sequence belongs to the G-protein coupled receptor 1 family. As to expression, not expressed in frontal cortex, basal forebrain, caudate putamen, thalamus, or hippocampus.

Its subcellular location is the cell membrane. Receptor for lysophosphatidic acid (LPA), a mediator of diverse cellular activities. This Homo sapiens (Human) protein is Lysophosphatidic acid receptor 5 (LPAR5).